The following is a 92-amino-acid chain: N(2)-fixation sustaining protein CowN (92 aa).

It belongs to the CowN family.

Its function is as follows. Is required to sustain N(2)-dependent growth in the presence of low levels of carbon monoxide (CO). Probably acts by protecting the N(2) fixation ability of the nitrogenase complex, which is inactivated in the presence of CO. The protein is N(2)-fixation sustaining protein CowN of Cereibacter sphaeroides (strain KD131 / KCTC 12085) (Rhodobacter sphaeroides).